The chain runs to 203 residues: Protein P10 (203 aa).

Disordered regions lie at residues 1–80 (MAGK…AAKK) and 166–203 (RDKKEAAKPMAQKVQEAKPTEHDPAAPYIEQLPVSNTL). Residues 39–49 (GGSGSDAGSGD) are compositionally biased toward gly residues. Positions 180 to 189 (QEAKPTEHDP) are enriched in basic and acidic residues.

In terms of biological role, assembly protein. The major coat protein P3 and two assembly factors (P10 and P17) are needed during the assembly of the virus particle inside the host cell, when the capsid protein multimers are capable of enclosing the host-derived membrane, containing the virus-encoded membrane-associated proteins. This Acinetobacter calcoaceticus (Arthrobacter siderocapsulatus) protein is Protein P10 (X).